Reading from the N-terminus, the 340-residue chain is Probable dual-specificity RNA methyltransferase RlmN (340 aa).

Glu-91 serves as the catalytic Proton acceptor. Positions 97 to 326 (HSGRVTACIS…CEIRKEKGTD (230 aa)) constitute a Radical SAM core domain. A disulfide bond links Cys-104 and Cys-331. Positions 111, 115, and 118 each coordinate [4Fe-4S] cluster. S-adenosyl-L-methionine contacts are provided by residues 158 to 159 (GE), Ser-190, 213 to 215 (SLH), and Asn-289. Cys-331 serves as the catalytic S-methylcysteine intermediate.

It belongs to the radical SAM superfamily. RlmN family. It depends on [4Fe-4S] cluster as a cofactor.

It is found in the cytoplasm. It carries out the reaction adenosine(2503) in 23S rRNA + 2 reduced [2Fe-2S]-[ferredoxin] + 2 S-adenosyl-L-methionine = 2-methyladenosine(2503) in 23S rRNA + 5'-deoxyadenosine + L-methionine + 2 oxidized [2Fe-2S]-[ferredoxin] + S-adenosyl-L-homocysteine. The enzyme catalyses adenosine(37) in tRNA + 2 reduced [2Fe-2S]-[ferredoxin] + 2 S-adenosyl-L-methionine = 2-methyladenosine(37) in tRNA + 5'-deoxyadenosine + L-methionine + 2 oxidized [2Fe-2S]-[ferredoxin] + S-adenosyl-L-homocysteine. Specifically methylates position 2 of adenine 2503 in 23S rRNA and position 2 of adenine 37 in tRNAs. This chain is Probable dual-specificity RNA methyltransferase RlmN, found in Thermosipho melanesiensis (strain DSM 12029 / CIP 104789 / BI429).